A 261-amino-acid chain; its full sequence is Cytochrome c oxidase subunit 3 (261 aa).

Residues 1–15 (MAHQAHAYHMVDPSP) lie on the Mitochondrial matrix side of the membrane. Residues 16 to 34 (WPLTGAIAALLMTSGLAIW) traverse the membrane as a helical segment. At 35 to 40 (FHFHST) the chain is on the mitochondrial intermembrane side. Residues 41-66 (TLMTLGLILLLLTMYQWWRDIIREGT) traverse the membrane as a helical segment. Residues 67-72 (FQGHHT) lie on the Mitochondrial matrix side of the membrane. Residues 73–105 (PPVQKGLRYGMILFITSEVFFFLGFFWAFYHSS) form a helical membrane-spanning segment. Topologically, residues 106-128 (LAPTPELGGCWPPTGITPLDPFE) are mitochondrial intermembrane. The helical transmembrane segment at 129 to 152 (VPLLNTAVLLASGVTVTWAHHSIM) threads the bilayer. Over 153–155 (EGE) the chain is Mitochondrial matrix. Residues 156 to 183 (RKQAIQSLALTILLGFYFTALQAMEYYE) traverse the membrane as a helical segment. Topologically, residues 184–190 (APFTIAD) are mitochondrial intermembrane. A helical membrane pass occupies residues 191–223 (GVYGSTFFVATGFHGLHVIIGSTFLAVCLLRQI). The Mitochondrial matrix portion of the chain corresponds to 224 to 232 (QYHFTSEHH). Residues 233–256 (FGFEAAAWYWHFVDVVWLFLYVSI) form a helical membrane-spanning segment. The Mitochondrial intermembrane segment spans residues 257-261 (YWWGS).

It belongs to the cytochrome c oxidase subunit 3 family. In terms of assembly, component of the cytochrome c oxidase (complex IV, CIV), a multisubunit enzyme composed of 14 subunits. The complex is composed of a catalytic core of 3 subunits MT-CO1, MT-CO2 and MT-CO3, encoded in the mitochondrial DNA, and 11 supernumerary subunits COX4I, COX5A, COX5B, COX6A, COX6B, COX6C, COX7A, COX7B, COX7C, COX8 and NDUFA4, which are encoded in the nuclear genome. The complex exists as a monomer or a dimer and forms supercomplexes (SCs) in the inner mitochondrial membrane with NADH-ubiquinone oxidoreductase (complex I, CI) and ubiquinol-cytochrome c oxidoreductase (cytochrome b-c1 complex, complex III, CIII), resulting in different assemblies (supercomplex SCI(1)III(2)IV(1) and megacomplex MCI(2)III(2)IV(2)).

The protein resides in the mitochondrion inner membrane. The catalysed reaction is 4 Fe(II)-[cytochrome c] + O2 + 8 H(+)(in) = 4 Fe(III)-[cytochrome c] + 2 H2O + 4 H(+)(out). Its function is as follows. Component of the cytochrome c oxidase, the last enzyme in the mitochondrial electron transport chain which drives oxidative phosphorylation. The respiratory chain contains 3 multisubunit complexes succinate dehydrogenase (complex II, CII), ubiquinol-cytochrome c oxidoreductase (cytochrome b-c1 complex, complex III, CIII) and cytochrome c oxidase (complex IV, CIV), that cooperate to transfer electrons derived from NADH and succinate to molecular oxygen, creating an electrochemical gradient over the inner membrane that drives transmembrane transport and the ATP synthase. Cytochrome c oxidase is the component of the respiratory chain that catalyzes the reduction of oxygen to water. Electrons originating from reduced cytochrome c in the intermembrane space (IMS) are transferred via the dinuclear copper A center (CU(A)) of subunit 2 and heme A of subunit 1 to the active site in subunit 1, a binuclear center (BNC) formed by heme A3 and copper B (CU(B)). The BNC reduces molecular oxygen to 2 water molecules using 4 electrons from cytochrome c in the IMS and 4 protons from the mitochondrial matrix. In Carassius auratus (Goldfish), this protein is Cytochrome c oxidase subunit 3 (mt-co3).